A 1413-amino-acid polypeptide reads, in one-letter code: VSIFIFHFSANILVRNSEMKGKRVISKREMSKADQCTFLSYQSVAYGTLGDVAGDVSSIEGADLVATPIAAGGHLAKGATDAAMIAMDCSSIPFDEIKQQLNQRFNEVDKKLQKGAEALENVTELAEKTYSSVEKMRVEMREGFNHVIATIENANTKQIITGINQIIQYFNDERENINNRQKEDYVAKLQEPASGNFLLYLRKSRTSEDGSLHSLLFKIINQELAIPNNAADNNAIRALFALFYGTQTFISIMFYLVKQYSYLADYHYQNGNLAEFNSNFDHMKTVFQDFKFTLIGINTSNSKPLVNTVLSIIEDVKNKRFIRNLRSNLYQKIIKSTKSLLDLREKITKMDLPIIEDTPKSSVLINFREKSSSVPRIETPILKWTPGTVVKYAIQYEQDGKYSKISKWSNPITVQRLANPYITIDKDRRNRLVFRQFGNEKPELISILDSSQNEFRDIHRDLYNAAQMPYKETALGICRKLIDSGAQVGASFEMGRKSIHASATAGNDDVARLLLAKNNGLLNVPDKNGYTPLHIASERKNNDFVKFLLEKGADVNVRTFANELTPLHLAARQDFTIIVKTLMEKRGIDVNAKERAGFTPLHLSITSNSRAARTLINETPAGINIKSNSGLTPLHLAVLQNNLSAAKVLVKSNKKVKLNEMDNNGMTPLHYASMLGNLEFVKYFTSEQGIDVNAKTKVKNWTPLHLAILFKKFDVAQSLLQVRNIDISTRADQAITPLHLAAATGNSQIVKTILNSGAVVDQETANGFTALHLAIMNPNTETPQFLIAKGANINAKTNDGSTPLHFAAALGKTNIFQLLMDKGANIKAENLINQMPIHEAVVNGHLAIVKMLIEQDSSLMNAKNMRDEYPFYLAAEKRYKDVFNYLESKGADVNEKNNDGNTLLHLFSINGEVEVVQFLIQNGADFRLRNKERKSFFDLAVEFGHAGIVGYAIEENKVDLQEPYRGKTILYHAICDSVKYDRIEVVRYFVETLNEDQCSPLQEAAAYAHLDLVKYFVQERGINPTAFNNDNQVSPLCIAIVGAPCGFVKSCDTPERLDVVEYLVDKTPDINKECDTQQSTPVSSAVYGNKVSILNYLIRNGADPNKKVRGDPPLFIAAMIGQYDIVKSLVEQHKIDVNTRNKEQFTPLHAAASNDHIDVVKYLIQKGADVNAKGDENLKPIDLAGEKSKAYLRSLGRRFFRNESPSKSFEIDKFNAIMPEVSMSGKVSHDSNFIQHISSGTRSKSNFNSAKNKMYAENSHVRSIDVNGALLLLDFMVRVFSNRKMNYAASISGIKSRSNSEAQAEALILTERFEHLLNALIADQSIDSLDFSNVHSRIYKAIINGNPNGISEMLCSYAKEYSELDPEKIEKLLQEFETLTFTKSSEIQINEKFSHALFETCGLNRPTNVLQIK.

Positions 1–28 (VSIFIFHFSANILVRNSEMKGKRVISKR) are excised as a propeptide. The helix H8 is the probable transmembrane region of the tetrameric pore inserted in the target cell membrane stretch occupies residues 238–257 (ALFALFYGTQTFISIMFYLV). ANK repeat units lie at residues 457-490 (DIHRDLYNAAQMPYKETALGICRKLIDSGAQVGA), 494-524 (MGRKSIHASATAGNDDVARLLLAKNNGLLNV), 528-557 (NGYTPLHIASERKNNDFVKFLLEKGADVNV), 562-592 (NELTPLHLAARQDFTIIVKTLMEKRGIDVNA), 596-625 (AGFTPLHLSITSNSRAARTLINETPAGINI), 629-658 (SGLTPLHLAVLQNNLSAAKVLVKSNKKVKL), 664-694 (NGMTPLHYASMLGNLEFVKYFTSEQGIDVNA), 699-729 (KNWTPLHLAILFKKFDVAQSLLQVRNIDIST), 733-762 (QAITPLHLAAATGNSQIVKTILNSGAVVDQ), 766-795 (NGFTALHLAIMNPNTETPQFLIAKGANINA), 799-828 (DGSTPLHFAAALGKTNIFQLLMDKGANIKA), 832-861 (INQMPIHEAVVNGHLAIVKMLIEQDSSLMN), 866-895 (RDEYPFYLAAEKRYKDVFNYLESKGADVNE), 899-928 (DGNTLLHLFSINGEVEVVQFLIQNGADFRL), 965-995 (RGKTILYHAICDSVKYDRIEVVRYFVETLNE), 996-1026 (DQCSPLQEAAAYAHLDLVKYFVQERGINPTA), 1031-1072 (NQVS…DINK), 1077-1106 (QQSTPVSSAVYGNKVSILNYLIRNGADPNK), 1109-1139 (RGDPPLFIAAMIGQYDIVKSLVEQHKIDVNT), and 1143-1172 (EQFTPLHAAASNDHIDVVKYLIQKGADVNA). Residues 1193-1413 (RSLGRRFFRN…NRPTNVLQIK (221 aa)) constitute a propeptide that is removed on maturation.

This sequence belongs to the cationic peptide 01 (latrotoxin) family. 01 (alpha-latrocrustotoxin) subfamily. In terms of assembly, homotetramer in membranes. Expressed by the venom gland.

Its subcellular location is the secreted. The protein localises to the target cell membrane. In terms of biological role, crustacean-selective presynaptic neurotoxin that induces neurotransmitter exocytosis. May bind to crustacean neurexin-1 homolog, adhesion G protein-coupled receptor L1 homolog, and receptor-type tyrosine-protein phosphatase S homolog, and induces neurotransmitter exocytosis both by forming tetrameric pores in membranes and signaling via G protein-coupled receptor. This recombinant protein form channels in artificial membrane bilayers, that are stabilized by calcium ions and allow calcium flux at negative membrane potentials. This Latrodectus tredecimguttatus (Mediterranean black widow spider) protein is Alpha-latrocrustotoxin-Lt1a.